The sequence spans 318 residues: Pantothenate kinase (318 aa).

96 to 103 (GSVAVGKS) lines the ATP pocket.

Belongs to the prokaryotic pantothenate kinase family.

The protein resides in the cytoplasm. It carries out the reaction (R)-pantothenate + ATP = (R)-4'-phosphopantothenate + ADP + H(+). It participates in cofactor biosynthesis; coenzyme A biosynthesis; CoA from (R)-pantothenate: step 1/5. The protein is Pantothenate kinase of Rhodopseudomonas palustris (strain BisB5).